Reading from the N-terminus, the 301-residue chain is GTPase Era (301 aa).

Residues 7-175 (YCGFIAIVGR…AGIVRKHLPE (169 aa)) enclose the Era-type G domain. Positions 15 to 22 (GRPNVGKS) are G1. 15 to 22 (GRPNVGKS) lines the GTP pocket. Residues 41–45 (QTTRH) form a G2 region. Residues 62–65 (DTPG) are G3. GTP contacts are provided by residues 62-66 (DTPGL) and 124-127 (NKVD). The segment at 124 to 127 (NKVD) is G4. The interval 154–156 (ISA) is G5. One can recognise a KH type-2 domain in the interval 206-283 (LGAELPYSVT…HLELWVKVKS (78 aa)).

The protein belongs to the TRAFAC class TrmE-Era-EngA-EngB-Septin-like GTPase superfamily. Era GTPase family. In terms of assembly, monomer.

The protein localises to the cytoplasm. It is found in the cell inner membrane. An essential GTPase that binds both GDP and GTP, with rapid nucleotide exchange. Plays a role in 16S rRNA processing and 30S ribosomal subunit biogenesis and possibly also in cell cycle regulation and energy metabolism. The polypeptide is GTPase Era (Salmonella heidelberg (strain SL476)).